Here is a 303-residue protein sequence, read N- to C-terminus: N-acetyl-D-glucosamine kinase (303 aa).

ATP contacts are provided by residues 4–11 and 133–140; these read GFDIGGTK and GVGGGLVL. Residues His-157, Cys-177, Cys-179, and Cys-184 each coordinate Zn(2+).

This sequence belongs to the ROK (NagC/XylR) family. NagK subfamily.

It catalyses the reaction N-acetyl-D-glucosamine + ATP = N-acetyl-D-glucosamine 6-phosphate + ADP + H(+). It functions in the pathway cell wall biogenesis; peptidoglycan recycling. In terms of biological role, catalyzes the phosphorylation of N-acetyl-D-glucosamine (GlcNAc) derived from cell-wall degradation, yielding GlcNAc-6-P. The polypeptide is N-acetyl-D-glucosamine kinase (Salmonella agona (strain SL483)).